A 420-amino-acid polypeptide reads, in one-letter code: Putative competence-damage inducible protein (420 aa).

It belongs to the CinA family.

In Halalkalibacterium halodurans (strain ATCC BAA-125 / DSM 18197 / FERM 7344 / JCM 9153 / C-125) (Bacillus halodurans), this protein is Putative competence-damage inducible protein.